Here is a 198-residue protein sequence, read N- to C-terminus: Large ribosomal subunit protein bL9 (198 aa).

Residues 156 to 166 are compositionally biased toward basic and acidic residues; that stretch reads RGEDISTRQED. A disordered region spans residues 156 to 198; that stretch reads RGEDISTRQEDQDAAAEALAAAGEFFDPEAHNDGEQEEEAGDK.

Belongs to the bacterial ribosomal protein bL9 family.

Binds to the 23S rRNA. The protein is Large ribosomal subunit protein bL9 of Rhodopseudomonas palustris (strain BisB18).